We begin with the raw amino-acid sequence, 477 residues long: Argininosuccinate lyase (477 aa).

The protein belongs to the lyase 1 family. Argininosuccinate lyase subfamily.

Its subcellular location is the cytoplasm. It catalyses the reaction 2-(N(omega)-L-arginino)succinate = fumarate + L-arginine. It participates in amino-acid biosynthesis; L-arginine biosynthesis; L-arginine from L-ornithine and carbamoyl phosphate: step 3/3. This Acinetobacter baumannii (strain AB307-0294) protein is Argininosuccinate lyase.